Here is a 704-residue protein sequence, read N- to C-terminus: Translin-associated factor X-interacting protein 1 (704 aa).

The tract at residues 1-37 (MANLQERKSFSKPRISIQASGGTPEAKGIEKRKLSQK) is disordered. Coiled-coil stretches lie at residues 190–230 (EISV…AEEY) and 304–342 (RRDL…LQLH).

In terms of assembly, interacts with TSNAX. As to expression, specifically expressed in testes. Predominantly detected in the post-meiotic stages of germ cells.

It localises to the cytoplasm. The protein resides in the perinuclear region. Possible role in spermatogenesis. This is Translin-associated factor X-interacting protein 1 from Mus musculus (Mouse).